A 298-amino-acid polypeptide reads, in one-letter code: MNYWESKSICTVFTKYNDTEIINKIDPVKSNIDHSLYKQYTIGYMSNFNIVNICKFVNKHSNYIFDIDTFSWLVLNPFSDPSFNIVLYDNDKIVATIVGILRSIKIKNEIHKIIHTTFLTVDENYRKQGIHFYIIDKLMENAFNKGVLLGIFSTMKKIKKIKCVNVQDTYIIKSDSKKYKENNNVFDYKKLNQKNDDLYFIYNDMEIEYWFNKKYCHIISIYNNLFCFLKIKYKNNENLNILIEQYIHNKNINKYSIPNNSIMFSQYIQLPQIKLQNQIYTYIYNLNFNNLKCNICMF.

Belongs to the NMT family.

The enzyme catalyses N-terminal glycyl-[protein] + tetradecanoyl-CoA = N-tetradecanoylglycyl-[protein] + CoA + H(+). Functionally, adds a myristoyl group to the N-terminal glycine residue of certain proteins. The protein is Putative glycylpeptide N-tetradecanoyltransferase of Melanoplus sanguinipes (Migratory grasshopper).